Here is a 1226-residue protein sequence, read N- to C-terminus: Methionine synthase (1226 aa).

One can recognise a Hcy-binding domain in the interval 7 to 327; sequence KVQIEKQLSE…EHIRQMALVV (321 aa). Residues Cys249, Cys312, and Cys313 each contribute to the Zn(2+) site. In terms of domain architecture, Pterin-binding spans 358–619; it reads FINVGERTNV…VPEDLREAVE (262 aa). The 95-residue stretch at 652-746 folds into the B12-binding N-terminal domain; that stretch reads SALEWRDWPV…FINASKEVGA (95 aa). Methylcob(III)alamin contacts are provided by residues Glu696, 758–762, His761, Ser806, Thr810, and Ala862; that span reads GDVHD. The B12-binding domain maps to 748–883; the sequence is NGKILLATVK…SNELKPSFVE (136 aa). Residues 899-1226 form the AdoMet activation domain; that stretch reads KQPRTKPVTL…AEKWLGPNLN (328 aa). Residues Asp949, Arg1137, and 1192-1193 contribute to the S-adenosyl-L-methionine site; that span reads YF.

It belongs to the vitamin-B12 dependent methionine synthase family. The cofactor is methylcob(III)alamin. Requires Zn(2+) as cofactor.

It catalyses the reaction (6S)-5-methyl-5,6,7,8-tetrahydrofolate + L-homocysteine = (6S)-5,6,7,8-tetrahydrofolate + L-methionine. Its pathway is amino-acid biosynthesis; L-methionine biosynthesis via de novo pathway; L-methionine from L-homocysteine (MetH route): step 1/1. Catalyzes the transfer of a methyl group from methyl-cobalamin to homocysteine, yielding enzyme-bound cob(I)alamin and methionine. Subsequently, remethylates the cofactor using methyltetrahydrofolate. This is Methionine synthase (metH) from Aliivibrio fischeri (Vibrio fischeri).